The primary structure comprises 1159 residues: Phosphatidylinositol 3-kinase age-1 (1159 aa).

Polar residues predominate over residues 1–25 (MSMGRSSSTTFRNRTASHGSRSLGS). The disordered stretch occupies residues 1-28 (MSMGRSSSTTFRNRTASHGSRSLGSAET). A PI3K-ABD domain is found at 79 to 179 (SEGVADMIVL…FPMLFLFEPD (101 aa)). The PI3K-RBD domain occupies 272 to 363 (RKSEANEVWE…YRCPGFVVRR (92 aa)). The 159-residue stretch at 430–588 (LDSNLMIRPV…VKMPNEAQYK (159 aa)) folds into the C2 PI3K-type domain. One can recognise a PIK helical domain in the interval 607–793 (DYEACIGDPG…SLLMEAYLRG (187 aa)). The PI3K/PI4K catalytic domain occupies 858 to 1159 (VIEKAIVLGS…NWLFHAMKHY (302 aa)). The interval 864-870 (VLGSAKQ) is G-loop. Residues 1028-1036 (GIKDRHSDN) form a catalytic loop region. Residues 1047–1073 (HIDFGHILGHGKTKLGIQRDRQPFILT) form an activation loop region.

It belongs to the PI3/PI4-kinase family.

It catalyses the reaction a 1,2-diacyl-sn-glycero-3-phospho-(1D-myo-inositol) + ATP = a 1,2-diacyl-sn-glycero-3-phospho-(1D-myo-inositol-3-phosphate) + ADP + H(+). Functionally, phosphatidylinositol 3-kinase homolog that regulates longevity and diapause. Promotes cell survival during embryonic development by recruiting akt-1/2 to the plasma membrane through the production of PtdIns(3,4,5)P3. Could function in the development or neuroendocrine signaling of the dauer pathway. Mediates susceptibility to enteropathogenic E.coli infection. May negatively regulate AYI interneuron neurite outgrowth. Plays a role in aversive olfactory learning when an odor is associated with food deprivation. Regulates this process by promoting the nuclear relocalization of egl-4 in AWC olfactory neurons after odor conditioning. The polypeptide is Phosphatidylinositol 3-kinase age-1 (age-1) (Caenorhabditis briggsae).